Here is a 408-residue protein sequence, read N- to C-terminus: Serine/threonine transporter SstT (408 aa).

The next 9 helical transmembrane spans lie at 11-31 (LANG…VILA), 43-63 (FLGS…VFIL), 81-101 (PIVV…VVLS), 141-161 (ALMT…GLAL), 192-212 (IGIF…AIAG), 216-236 (LLAV…PLIV), 298-318 (MGGA…TLGI), 330-350 (VVAA…LLLI), and 357-377 (FGIS…IGVI).

Belongs to the dicarboxylate/amino acid:cation symporter (DAACS) (TC 2.A.23) family.

It is found in the cell inner membrane. It carries out the reaction L-serine(in) + Na(+)(in) = L-serine(out) + Na(+)(out). The catalysed reaction is L-threonine(in) + Na(+)(in) = L-threonine(out) + Na(+)(out). In terms of biological role, involved in the import of serine and threonine into the cell, with the concomitant import of sodium (symport system). In Shewanella sp. (strain W3-18-1), this protein is Serine/threonine transporter SstT.